We begin with the raw amino-acid sequence, 163 residues long: uncharacterized protein (163 aa).

The segment at 144-163 is disordered; it reads WSHSQSQLGTPGRGKGALGF. The span at 154–163 shows a compositional bias: gly residues; sequence PGRGKGALGF.

This is an uncharacterized protein from Homo sapiens (Human).